The following is a 457-amino-acid chain: Interferon regulatory factor 7 (457 aa).

The segment at residues 9–126 (RVLFGDWLLG…DPHKVYELSR (118 aa)) is a DNA-binding region (IRF tryptophan pentad repeat). At lysine 92 the chain carries N6-acetyllysine; by KAT2A and KAT2B. Residues 238–410 (RSLGFLDVTI…TLILVKLEPW (173 aa)) form a necessary for the interaction with NMI region. Lysine 329 is covalently cross-linked (Glycyl lysine isopeptide (Lys-Gly) (interchain with G-Cter in ubiquitin)). Glycyl lysine isopeptide (Lys-Gly) (interchain with G-Cter in SUMO) cross-links involve residues lysine 398 and lysine 400. Residues serine 425, serine 426, and serine 429 each carry the phosphoserine modification. Residue serine 431 is modified to Phosphoserine; by TBK1 and IKKE. Phosphoserine occurs at positions 437, 438, and 441.

The protein belongs to the IRF family. Monomer. Homodimer; phosphorylation-induced. Heterodimer with IRF3. Interacts with TICAM1 and TICAM2. Interacts with MYD88 and TRAF6. Interacts with NMI; the interaction is direct and leads to the inhibition of IRF7-mediated type I IFN production. Interacts with GBP4; preventing interaction between TRAF6 and IRF7, resulting in impaired TRAF6-mediated IRF7 ubiquitination. Interacts with TARBP2; this interaction prevents IRF7 phosphorylation and activation. Post-translationally, acetylation inhibits its DNA-binding ability and activity. In response to a viral infection, phosphorylated by TBK1 and IKBKE1. Phosphorylation, and subsequent activation is inhibited by vaccinia virus protein E3. In TLR7- and TLR9-mediated signaling pathway, phosphorylated by IRAK1. In terms of processing, TRAF6-mediated ubiquitination is required for IRF7 activation. TRIM35 mediates IRF7 'Lys-48'-linked polyubiquitination and subsequent proteasomal degradation. 'Lys-48'-linked polyubiquitination and subsequent proteasomal degradation is NMI-dependent in response to Sendai virus infection. Ubiquitinated by UBE3C, leading to its degradation. Post-translationally, sumoylated by TRIM28, which inhibits its transactivation activity. 'Lys-63'-linked ubiquitination by NEURL3 promotes IRF7 activation.

The protein localises to the nucleus. The protein resides in the cytoplasm. With respect to regulation, in the absence of viral infection, maintained as a monomer in an autoinhibited state and phosphorylation disrupts this autoinhibition leading to the liberation of the DNA-binding and dimerization activities and its nuclear localization where it can activate type I IFN and ISG genes. Its function is as follows. Key transcriptional regulator of type I interferon (IFN)-dependent immune responses and plays a critical role in the innate immune response against DNA and RNA viruses. Regulates the transcription of type I IFN genes (IFN-alpha and IFN-beta) and IFN-stimulated genes (ISG) by binding to an interferon-stimulated response element (ISRE) in their promoters. Can efficiently activate both the IFN-beta (IFNB) and the IFN-alpha (IFNA) genes and mediate their induction via both the virus-activated, MyD88-independent pathway and the TLR-activated, MyD88-dependent pathway. Induces transcription of ubiquitin hydrolase USP25 mRNA in response to lipopolysaccharide (LPS) or viral infection in a type I IFN-dependent manner. Required during both the early and late phases of the IFN gene induction but is more critical for the late than for the early phase. Exists in an inactive form in the cytoplasm of uninfected cells and following viral infection, double-stranded RNA (dsRNA), or toll-like receptor (TLR) signaling, becomes phosphorylated by IKBKE and TBK1 kinases. This induces a conformational change, leading to its dimerization and nuclear localization where along with other coactivators it can activate transcription of the type I IFN and ISG genes. Can also play a role in regulating adaptive immune responses by inducing PSMB9/LMP2 expression, either directly or through induction of IRF1. Binds to the Q promoter (Qp) of EBV nuclear antigen 1 a (EBNA1) and may play a role in the regulation of EBV latency. Can activate distinct gene expression programs in macrophages and regulate the anti-tumor properties of primary macrophages. This chain is Interferon regulatory factor 7 (Irf7), found in Mus musculus (Mouse).